We begin with the raw amino-acid sequence, 291 residues long: Secreted effector protein PipB (291 aa).

Pentapeptide repeat domains are found at residues 154–193 (LNLRGVNLAHKDFQGEDLSKIDASNADFRETTLSNVNLVG) and 199–238 (ANLHAVNLMGSNMTKANLTHADLTCANMSGVNLTAAILFG).

It localises to the secreted. The protein localises to the host membrane. In terms of biological role, effector proteins function to alter host cell physiology and promote bacterial survival in host tissues. Does not appear to be required for the formation or the maintenance of either Salmonella-containing vacuole (SCV) or the Salmonella-induced filaments (Sifs). Not required for intracellular replication in phagocytic cells. The sequence is that of Secreted effector protein PipB (pipB) from Salmonella typhimurium (strain LT2 / SGSC1412 / ATCC 700720).